The following is a 295-amino-acid chain: Ribosomal RNA small subunit methyltransferase A (295 aa).

Positions 31, 33, 58, 79, 104, and 129 each coordinate S-adenosyl-L-methionine.

Belongs to the class I-like SAM-binding methyltransferase superfamily. rRNA adenine N(6)-methyltransferase family. RsmA subfamily.

It is found in the cytoplasm. It carries out the reaction adenosine(1518)/adenosine(1519) in 16S rRNA + 4 S-adenosyl-L-methionine = N(6)-dimethyladenosine(1518)/N(6)-dimethyladenosine(1519) in 16S rRNA + 4 S-adenosyl-L-homocysteine + 4 H(+). Its function is as follows. Specifically dimethylates two adjacent adenosines (A1518 and A1519) in the loop of a conserved hairpin near the 3'-end of 16S rRNA in the 30S particle. May play a critical role in biogenesis of 30S subunits. This chain is Ribosomal RNA small subunit methyltransferase A, found in Leuconostoc citreum (strain KM20).